We begin with the raw amino-acid sequence, 470 residues long: 3-isopropylmalate dehydratase large subunit (470 aa).

The segment covering 294 to 307 (PDQNTGISGSTPNP) has biased composition (polar residues). The disordered stretch occupies residues 294–313 (PDQNTGISGSTPNPSDAADD). [4Fe-4S] cluster is bound by residues cysteine 347, cysteine 407, and cysteine 410.

It belongs to the aconitase/IPM isomerase family. LeuC type 1 subfamily. In terms of assembly, heterodimer of LeuC and LeuD. It depends on [4Fe-4S] cluster as a cofactor.

It catalyses the reaction (2R,3S)-3-isopropylmalate = (2S)-2-isopropylmalate. Its pathway is amino-acid biosynthesis; L-leucine biosynthesis; L-leucine from 3-methyl-2-oxobutanoate: step 2/4. In terms of biological role, catalyzes the isomerization between 2-isopropylmalate and 3-isopropylmalate, via the formation of 2-isopropylmaleate. This is 3-isopropylmalate dehydratase large subunit from Akkermansia muciniphila (strain ATCC BAA-835 / DSM 22959 / JCM 33894 / BCRC 81048 / CCUG 64013 / CIP 107961 / Muc).